Reading from the N-terminus, the 100-residue chain is Urease subunit gamma (100 aa).

It belongs to the urease gamma subunit family. As to quaternary structure, heterotrimer of UreA (gamma), UreB (beta) and UreC (alpha) subunits. Three heterotrimers associate to form the active enzyme.

The protein localises to the cytoplasm. It carries out the reaction urea + 2 H2O + H(+) = hydrogencarbonate + 2 NH4(+). It participates in nitrogen metabolism; urea degradation; CO(2) and NH(3) from urea (urease route): step 1/1. The sequence is that of Urease subunit gamma from Alcanivorax borkumensis (strain ATCC 700651 / DSM 11573 / NCIMB 13689 / SK2).